The primary structure comprises 386 residues: MSSSQRAKETVVITGGGGYFGHRLGCTLHEKGVHVILFDIRKPDQELPEGIHFVQGDVRSLSQLEDVVAGASCVFHTASYGMSGKEQLHRQKIEAINVRGTENIIQACINTNVPRLVYTSTFNVIFGGQTIRDGDESLPYLPQDAFVDNYSRTKTVAEMFVLKMNNQELKNNSGFLRTCSLRAAGIYGPGEQRHLPRIISALEKGMFLFVYGDNPLVQFVHVDNLISAHILAAEALTSEKKYIAAGQPYFISDGPPVNNFEFFRPLVEGLGYKFPSLRFPLSLVYFFAFLTEWIHFFISPVCDFQPILTRAEVFKTGVTHYFKIEKATRELGFEPQPFTMQDVAEWFKNHGYGKQDKKIKSNYLIWDIIFILLVTVVLLSWLPSSE.

Residue Tyr150 is the Proton acceptor of the active site. Position 154 (Lys154) interacts with NAD(+). 2 helical membrane passes run 279-299 and 363-383; these read FPLS…FFIS and YLIW…SWLP.

It belongs to the 3-beta-HSD family.

The protein resides in the membrane. The polypeptide is Short-chain dehydrogenase/reductase family 42E member 1 (sdr42e1) (Xenopus laevis (African clawed frog)).